We begin with the raw amino-acid sequence, 165 residues long: MAKVIKINLIVNKRMSPAIILIGVLILIVLFVIKFNSSEVSSILTSEVTSEGDDEHETETRETTGCISQLNTLRATLAAKKKELKTLRTARKKECTEQLAKTQAEVDRIQAKIDNFSSRTKIVPLPGGEVGPPYNPPPPRTNTRPNPRPNPRPAQLPQLYNYGYY.

Residues 15–35 (MSPAIILIGVLILIVLFVIKF) traverse the membrane as a helical segment. A coiled-coil region spans residues 67 to 119 (ISQLNTLRATLAAKKKELKTLRTARKKECTEQLAKTQAEVDRIQAKIDNFSSR). Residues 123–156 (VPLPGGEVGPPYNPPPPRTNTRPNPRPNPRPAQL) are disordered. Residues 133–154 (PYNPPPPRTNTRPNPRPNPRPA) show a composition bias toward pro residues.

The protein resides in the membrane. This is an uncharacterized protein from Acheta domesticus (House cricket).